The sequence spans 266 residues: ATP synthase subunit a (266 aa).

7 helical membrane-spanning segments follow: residues 41–61, 98–118, 119–139, 152–172, 178–198, 216–236, and 237–257; these read IDTLIMSFGLGALFCYVFWLA, VIAPLALTIFCWVFLSNLMDL, VPIDMVPSIMMAVGVDYWKIL, LSVLALIIIYGVMGQGVGGWL, HPLGPWLAPANLILNIVEFIA, LVFILISLLPWWIQWALGTPW, and AIFHILVVPLQAFIFMMLTVV.

The protein belongs to the ATPase A chain family. In terms of assembly, F-type ATPases have 2 components, CF(1) - the catalytic core - and CF(0) - the membrane proton channel. CF(1) has five subunits: alpha(3), beta(3), gamma(1), delta(1), epsilon(1). CF(0) has three main subunits: a(1), b(2) and c(9-12). The alpha and beta chains form an alternating ring which encloses part of the gamma chain. CF(1) is attached to CF(0) by a central stalk formed by the gamma and epsilon chains, while a peripheral stalk is formed by the delta and b chains.

It is found in the cell inner membrane. Key component of the proton channel; it plays a direct role in the translocation of protons across the membrane. The sequence is that of ATP synthase subunit a from Halorhodospira halophila (strain DSM 244 / SL1) (Ectothiorhodospira halophila (strain DSM 244 / SL1)).